The primary structure comprises 246 residues: NAD-dependent protein deacylase (246 aa).

The 246-residue stretch at 1 to 246 (MDLSQARAAL…RGLELLLEDD (246 aa)) folds into the Deacetylase sirtuin-type domain. 21 to 41 (GAGISAESGIPTFRDAQTGHW) is a binding site for NAD(+). Y66 and R69 together coordinate substrate. Position 101-104 (101-104 (QNVD)) interacts with NAD(+). The Proton acceptor role is filled by H123. Residues 191–193 (GTS), 217–219 (NPE), and A235 each bind NAD(+).

It belongs to the sirtuin family. Class III subfamily.

The protein resides in the cytoplasm. The enzyme catalyses N(6)-acetyl-L-lysyl-[protein] + NAD(+) + H2O = 2''-O-acetyl-ADP-D-ribose + nicotinamide + L-lysyl-[protein]. It catalyses the reaction N(6)-succinyl-L-lysyl-[protein] + NAD(+) + H2O = 2''-O-succinyl-ADP-D-ribose + nicotinamide + L-lysyl-[protein]. Its function is as follows. NAD-dependent lysine deacetylase and desuccinylase that specifically removes acetyl and succinyl groups on target proteins. Modulates the activities of several proteins which are inactive in their acylated form. The polypeptide is NAD-dependent protein deacylase (Deinococcus radiodurans (strain ATCC 13939 / DSM 20539 / JCM 16871 / CCUG 27074 / LMG 4051 / NBRC 15346 / NCIMB 9279 / VKM B-1422 / R1)).